The following is a 1212-amino-acid chain: DNA-directed RNA polymerase subunit beta (1212 aa).

Basic and acidic residues predominate over residues 1176-1195 (QQEKKKLAEEAAKKDDKSAE). A disordered region spans residues 1176-1212 (QQEKKKLAEEAAKKDDKSAEPVDQSDSSTSSDDKVSK).

The protein belongs to the RNA polymerase beta chain family. As to quaternary structure, the RNAP catalytic core consists of 2 alpha, 1 beta, 1 beta' and 1 omega subunit. When a sigma factor is associated with the core the holoenzyme is formed, which can initiate transcription.

It carries out the reaction RNA(n) + a ribonucleoside 5'-triphosphate = RNA(n+1) + diphosphate. DNA-dependent RNA polymerase catalyzes the transcription of DNA into RNA using the four ribonucleoside triphosphates as substrates. This Lactobacillus gasseri (strain ATCC 33323 / DSM 20243 / BCRC 14619 / CIP 102991 / JCM 1131 / KCTC 3163 / NCIMB 11718 / NCTC 13722 / AM63) protein is DNA-directed RNA polymerase subunit beta.